A 137-amino-acid chain; its full sequence is uncharacterized protein (137 aa).

To E.coli YfdK.

This is an uncharacterized protein from Escherichia coli (strain K12).